We begin with the raw amino-acid sequence, 457 residues long: tRNA(Ile)-lysidine synthase (457 aa).

27–32 (SGGLDS) contacts ATP.

The protein belongs to the tRNA(Ile)-lysidine synthase family.

The protein resides in the cytoplasm. It catalyses the reaction cytidine(34) in tRNA(Ile2) + L-lysine + ATP = lysidine(34) in tRNA(Ile2) + AMP + diphosphate + H(+). Its function is as follows. Ligates lysine onto the cytidine present at position 34 of the AUA codon-specific tRNA(Ile) that contains the anticodon CAU, in an ATP-dependent manner. Cytidine is converted to lysidine, thus changing the amino acid specificity of the tRNA from methionine to isoleucine. In Hamiltonella defensa subsp. Acyrthosiphon pisum (strain 5AT), this protein is tRNA(Ile)-lysidine synthase.